Consider the following 278-residue polypeptide: Alcohol dehydrogenase-related 31 kDa protein (278 aa).

11-34 contacts NAD(+); it reads YVADCGGIALETSKVLMTKNIAKL. S139 lines the substrate pocket. The Proton acceptor role is filled by Y152.

Belongs to the short-chain dehydrogenases/reductases (SDR) family.

The sequence is that of Alcohol dehydrogenase-related 31 kDa protein (Adhr) from Drosophila persimilis (Fruit fly).